The primary structure comprises 242 residues: Pyridoxine 5'-phosphate synthase (242 aa).

Asn-7 is a binding site for 3-amino-2-oxopropyl phosphate. 9–10 (DH) serves as a coordination point for 1-deoxy-D-xylulose 5-phosphate. Residue Arg-18 coordinates 3-amino-2-oxopropyl phosphate. Catalysis depends on His-43, which acts as the Proton acceptor. 1-deoxy-D-xylulose 5-phosphate contacts are provided by Arg-45 and His-50. Glu-70 (proton acceptor) is an active-site residue. Residue Thr-100 coordinates 1-deoxy-D-xylulose 5-phosphate. Residue His-191 is the Proton donor of the active site. 3-amino-2-oxopropyl phosphate is bound by residues Gly-192 and 213 to 214 (GH).

This sequence belongs to the PNP synthase family. In terms of assembly, homooctamer; tetramer of dimers.

Its subcellular location is the cytoplasm. The catalysed reaction is 3-amino-2-oxopropyl phosphate + 1-deoxy-D-xylulose 5-phosphate = pyridoxine 5'-phosphate + phosphate + 2 H2O + H(+). It participates in cofactor biosynthesis; pyridoxine 5'-phosphate biosynthesis; pyridoxine 5'-phosphate from D-erythrose 4-phosphate: step 5/5. Its function is as follows. Catalyzes the complicated ring closure reaction between the two acyclic compounds 1-deoxy-D-xylulose-5-phosphate (DXP) and 3-amino-2-oxopropyl phosphate (1-amino-acetone-3-phosphate or AAP) to form pyridoxine 5'-phosphate (PNP) and inorganic phosphate. The chain is Pyridoxine 5'-phosphate synthase from Chromobacterium violaceum (strain ATCC 12472 / DSM 30191 / JCM 1249 / CCUG 213 / NBRC 12614 / NCIMB 9131 / NCTC 9757 / MK).